The sequence spans 345 residues: Probable 1-aminocyclopropane-1-carboxylate deaminase (345 aa).

K58 bears the N6-(pyridoxal phosphate)lysine mark. Catalysis depends on S85, which acts as the Nucleophile.

Belongs to the ACC deaminase/D-cysteine desulfhydrase family. The cofactor is pyridoxal 5'-phosphate.

It catalyses the reaction 1-aminocyclopropane-1-carboxylate + H2O = 2-oxobutanoate + NH4(+). In terms of biological role, catalyzes a cyclopropane ring-opening reaction, the irreversible conversion of 1-aminocyclopropane-1-carboxylate (ACC) to ammonia and alpha-ketobutyrate. The chain is Probable 1-aminocyclopropane-1-carboxylate deaminase from Cryptococcus neoformans var. neoformans serotype D (strain JEC21 / ATCC MYA-565) (Filobasidiella neoformans).